Reading from the N-terminus, the 243-residue chain is UPF0246 protein SAK_2020 (243 aa).

Belongs to the UPF0246 family.

The polypeptide is UPF0246 protein SAK_2020 (Streptococcus agalactiae serotype Ia (strain ATCC 27591 / A909 / CDC SS700)).